Reading from the N-terminus, the 122-residue chain is Large ribosomal subunit protein uL14c (122 aa).

This sequence belongs to the universal ribosomal protein uL14 family. As to quaternary structure, part of the 50S ribosomal subunit.

It is found in the plastid. The protein localises to the chloroplast. In terms of biological role, binds to 23S rRNA. The polypeptide is Large ribosomal subunit protein uL14c (Cycas taitungensis (Prince sago)).